A 297-amino-acid polypeptide reads, in one-letter code: Small ribosomal subunit biogenesis GTPase RsgA (297 aa).

One can recognise a CP-type G domain in the interval 65 to 223 (INEIGRPAVA…IADTPGFSAI (159 aa)). Residues 114–117 (SKSD) and 166–174 (GQSGAGKST) contribute to the GTP site. Zn(2+) is bound by residues C247, C252, H254, and C260.

This sequence belongs to the TRAFAC class YlqF/YawG GTPase family. RsgA subfamily. In terms of assembly, monomer. Associates with 30S ribosomal subunit, binds 16S rRNA. Zn(2+) is required as a cofactor.

It localises to the cytoplasm. Functionally, one of several proteins that assist in the late maturation steps of the functional core of the 30S ribosomal subunit. Helps release RbfA from mature subunits. May play a role in the assembly of ribosomal proteins into the subunit. Circularly permuted GTPase that catalyzes slow GTP hydrolysis, GTPase activity is stimulated by the 30S ribosomal subunit. This chain is Small ribosomal subunit biogenesis GTPase RsgA, found in Lactobacillus johnsonii (strain CNCM I-12250 / La1 / NCC 533).